The sequence spans 201 residues: Extracellular superoxide dismutase [Cu-Zn] (201 aa).

The signal sequence occupies residues 1 to 42; sequence MINSFIVIFLSFLIFINYANLVCVEATHVYGRRSHSNGMHGN. Residues His89, His91, and His106 each coordinate Cu cation. Residues Cys100 and Cys192 are joined by a disulfide bond. 4 residues coordinate Zn(2+): His106, His114, His123, and Asp126. His163 serves as a coordination point for Cu cation.

It belongs to the Cu-Zn superoxide dismutase family. In terms of assembly, homodimer. Cu cation is required as a cofactor. Requires Zn(2+) as cofactor.

It localises to the secreted. Its subcellular location is the extracellular space. The catalysed reaction is 2 superoxide + 2 H(+) = H2O2 + O2. Destroys radicals which are normally produced within the cells and which are toxic to biological systems. May act in the parasite defense against phagocyte-generated reactive oxygen species. The sequence is that of Extracellular superoxide dismutase [Cu-Zn] (sod-4) from Onchocerca volvulus.